The sequence spans 260 residues: 14-3-3 protein 3 (260 aa).

This sequence belongs to the 14-3-3 family. As to quaternary structure, homodimer.

The polypeptide is 14-3-3 protein 3 (TFT3) (Solanum lycopersicum (Tomato)).